We begin with the raw amino-acid sequence, 1056 residues long: Kinesin-like protein KIF11 (1056 aa).

A Kinesin motor domain is found at 18 to 359; the sequence is NIQVVVRCRP…LEYAHRAKNI (342 aa). ATP is bound at residue 105-112; sequence GQTGTGKT. Lys-146 is subject to N6-acetyllysine. 2 coiled-coil regions span residues 364-480 and 736-763; these read EVNQ…KEEY and LEEK…DIVN. Thr-458 is subject to Phosphothreonine. Lys-477 participates in a covalent cross-link: Glycyl lysine isopeptide (Lys-Gly) (interchain with G-Cter in SUMO2). A Phosphothreonine modification is found at Thr-925. At Thr-926 the chain carries Phosphothreonine; by CDK1. Ser-1033 bears the Phosphoserine; by NEK6 mark. A Glycyl lysine isopeptide (Lys-Gly) (interchain with G-Cter in ubiquitin) cross-link involves residue Lys-1034.

It belongs to the TRAFAC class myosin-kinesin ATPase superfamily. Kinesin family. BimC subfamily. In terms of assembly, interacts with the thyroid hormone receptor in the presence of thyroid hormone. Component of a large chromatin remodeling complex, at least composed of MYSM1, PCAF, RBM10 and KIF11/TRIP5. Interacts (via C-terminus) with the kinase NEK6 in both interphase and mitosis. Interacts with RARRES1 and AGBL2. Interacts with TPX2. In terms of processing, phosphorylated exclusively on serine during S phase, but on both serine and Thr-926 during mitosis, so controlling the association of KIF11 with the spindle apparatus (probably during early prophase). A subset of this protein primarily localized at the spindle pole is phosphorylated by NEK6 during mitosis; phosphorylation is required for mitotic function. Post-translationally, ubiquitinated at Lys-1034 by UHRF1 via 'Lys-63'-linked ubiquitin chains, leading to interaction with spindle assembly factor TPX2, thereby ensuring accurate distribution to the spindles during metaphase.

Its subcellular location is the cytoplasm. The protein localises to the cytoskeleton. The protein resides in the spindle pole. Its function is as follows. Motor protein required for establishing a bipolar spindle and thus contributing to chromosome congression during mitosis. Required in non-mitotic cells for transport of secretory proteins from the Golgi complex to the cell surface. The chain is Kinesin-like protein KIF11 (KIF11) from Homo sapiens (Human).